The chain runs to 196 residues: Probable malonic semialdehyde reductase RutE (196 aa).

It belongs to the nitroreductase family. HadB/RutE subfamily. The cofactor is FMN.

The enzyme catalyses 3-hydroxypropanoate + NADP(+) = 3-oxopropanoate + NADPH + H(+). In terms of biological role, may reduce toxic product malonic semialdehyde to 3-hydroxypropionic acid, which is excreted. The polypeptide is Probable malonic semialdehyde reductase RutE (Escherichia coli O45:K1 (strain S88 / ExPEC)).